The primary structure comprises 791 residues: FHF complex subunit HOOK-interacting protein 1B (791 aa).

2 disordered regions span residues A465–P510 and S524–E556. S467 carries the post-translational modification Phosphoserine. Low complexity predominate over residues S496 to P510. 5 positions are modified to phosphoserine: S524, S537, S543, S547, and S679. Positions T541–P552 are enriched in low complexity. T708 is subject to Phosphothreonine. The residue at position 716 (S716) is a Phosphoserine.

Belongs to the FHIP family. In terms of assembly, component of the FTS/Hook/FHIP complex (FHF complex), composed of AKTIP/FTS, FHIP1B, and one or more members of the Hook family of proteins HOOK1, HOOK2, and HOOK3. The FHF complex associates with the homotypic vesicular sorting complex (the HOPS complex).

In terms of biological role, component of the FTS/Hook/FHIP complex (FHF complex). The FHF complex may function to promote vesicle trafficking and/or fusion via the homotypic vesicular protein sorting complex (the HOPS complex). FHF complex promotes the distribution of AP-4 complex to the perinuclear area of the cell. The chain is FHF complex subunit HOOK-interacting protein 1B (Fhip1b) from Rattus norvegicus (Rat).